The chain runs to 273 residues: 29 kDa ribonucleoprotein A, chloroplastic (273 aa).

Residues 1-58 (MASSASSLHFLSLTPQTLPLPKPTSQTTSLSFFSLPPSSLNLSLSSSSSCFSSRFVRK) constitute a chloroplast transit peptide. The RRM 1 domain occupies 87–165 (LKIFVGNLPF…RALRVNSGPP (79 aa)). Residues 156-181 (RALRVNSGPPPEKRENSSFRGGSRGG) are disordered. Positions 166–187 (PEKRENSSFRGGSRGGGSFDSS) are linker (Gly-rich). In terms of domain architecture, RRM 2 spans 188–266 (NRVYVGNLAW…RAIRVSPAEA (79 aa)).

It is found in the plastid. The protein resides in the chloroplast. Its function is as follows. Could be involved in splicing and/or processing of chloroplast RNA's. This Nicotiana sylvestris (Wood tobacco) protein is 29 kDa ribonucleoprotein A, chloroplastic.